A 68-amino-acid polypeptide reads, in one-letter code: Protein SlyX homolog (68 aa).

The protein belongs to the SlyX family.

This is Protein SlyX homolog from Brucella abortus (strain S19).